A 276-amino-acid chain; its full sequence is Undecaprenyl-diphosphatase (276 aa).

7 helical membrane-spanning segments follow: residues 1 to 21 (MSWL…FLPV), 39 to 59 (AGAS…LVYF), 84 to 104 (YWLG…GLLF), 115 to 135 (LWLV…AEYY), 188 to 208 (FGFL…LPDA), 222 to 242 (QLFV…AWFL), and 253 to 273 (FVGY…AGVV).

The protein belongs to the UppP family.

It is found in the cell membrane. The catalysed reaction is di-trans,octa-cis-undecaprenyl diphosphate + H2O = di-trans,octa-cis-undecaprenyl phosphate + phosphate + H(+). Functionally, catalyzes the dephosphorylation of undecaprenyl diphosphate (UPP). Confers resistance to bacitracin. The chain is Undecaprenyl-diphosphatase from Mycolicibacterium vanbaalenii (strain DSM 7251 / JCM 13017 / BCRC 16820 / KCTC 9966 / NRRL B-24157 / PYR-1) (Mycobacterium vanbaalenii).